Consider the following 282-residue polypeptide: MAITAAQVKELRERTGAGMMDCKKALTETNGDIELAIENMRKSGAAKAAKKAGNIAAEGTILIKQGEGFSVLLEVNCQTDFVAKDSNFLAFANEVLDVAAAGKVSIADLQAQFEETRVALVAKIGENINVRRVEYIDGASQASYRHGDRIGVVVTGEADEETLKHVAMHVAASKPEYVNPSDVPAEVVEKEKAVQIEIAMNEGKPQEIAEKMVAGRMKKFTGEVSLTGQAFIMEPKKTVGEILKEKGATVTNFIRLEVGEGIEKKEEDFAAEVAAQIAASKA.

An involved in Mg(2+) ion dislocation from EF-Tu region spans residues Thr79–Val82.

Belongs to the EF-Ts family.

Its subcellular location is the cytoplasm. In terms of biological role, associates with the EF-Tu.GDP complex and induces the exchange of GDP to GTP. It remains bound to the aminoacyl-tRNA.EF-Tu.GTP complex up to the GTP hydrolysis stage on the ribosome. This is Elongation factor Ts from Shewanella loihica (strain ATCC BAA-1088 / PV-4).